We begin with the raw amino-acid sequence, 194 residues long: GTP cyclohydrolase 1 (194 aa).

C83, H86, and C155 together coordinate Zn(2+).

This sequence belongs to the GTP cyclohydrolase I family. Toroid-shaped homodecamer, composed of two pentamers of five dimers.

The catalysed reaction is GTP + H2O = 7,8-dihydroneopterin 3'-triphosphate + formate + H(+). It functions in the pathway cofactor biosynthesis; 7,8-dihydroneopterin triphosphate biosynthesis; 7,8-dihydroneopterin triphosphate from GTP: step 1/1. This is GTP cyclohydrolase 1 from Streptococcus pyogenes serotype M5 (strain Manfredo).